The following is a 254-amino-acid chain: Alcohol dehydrogenase (254 aa).

An NAD(+)-binding site is contributed by Phe-10–Leu-33. Substrate is bound at residue Ser-138. The active-site Proton acceptor is Tyr-151.

It belongs to the short-chain dehydrogenases/reductases (SDR) family. As to quaternary structure, homodimer.

The enzyme catalyses a primary alcohol + NAD(+) = an aldehyde + NADH + H(+). It carries out the reaction a secondary alcohol + NAD(+) = a ketone + NADH + H(+). This Drosophila picticornis (Fruit fly) protein is Alcohol dehydrogenase (Adh).